A 380-amino-acid polypeptide reads, in one-letter code: Cytochrome b (380 aa).

4 helical membrane-spanning segments follow: residues 33–53, 77–98, 113–133, and 178–198; these read FGSLLGICLMVQIITGLFLAM, WLIRYMHANGASMFFICLFIHV, WNIGIALFLTTMATAFVGYVL, and FFAFHFILPFIITAFVLVHLL. 2 residues coordinate heme b: histidine 83 and histidine 97. Residues histidine 182 and histidine 196 each contribute to the heme b site. An a ubiquinone-binding site is contributed by histidine 201. 4 consecutive transmembrane segments (helical) span residues 226–246, 288–308, 320–340, and 347–367; these read IKDILGILMLLMVLMILVLFF, LGGVTALILSILILAMFPLIN, ITQAMYWIFIANLFILTWIGG, and FTMIGLISSILYFSIIVMFMF.

The protein belongs to the cytochrome b family. As to quaternary structure, the cytochrome bc1 complex contains 11 subunits: 3 respiratory subunits (MT-CYB, CYC1 and UQCRFS1), 2 core proteins (UQCRC1 and UQCRC2) and 6 low-molecular weight proteins (UQCRH/QCR6, UQCRB/QCR7, UQCRQ/QCR8, UQCR10/QCR9, UQCR11/QCR10 and a cleavage product of UQCRFS1). This cytochrome bc1 complex then forms a dimer. Heme b is required as a cofactor.

It localises to the mitochondrion inner membrane. Functionally, component of the ubiquinol-cytochrome c reductase complex (complex III or cytochrome b-c1 complex) that is part of the mitochondrial respiratory chain. The b-c1 complex mediates electron transfer from ubiquinol to cytochrome c. Contributes to the generation of a proton gradient across the mitochondrial membrane that is then used for ATP synthesis. This is Cytochrome b (MT-CYB) from Calomys musculinus (Drylands vesper mouse).